Reading from the N-terminus, the 332-residue chain is T-cell surface glycoprotein CD1c3 (332 aa).

Residues 1-17 (MLFLQFLFLDVVLGGSI) form the signal peptide. Over 18–300 (TKNVVQENIS…IILYWGHGLS (283 aa)) the chain is Extracellular. N-linked (GlcNAc...) asparagine glycosylation is found at Asn25, Asn38, Asn75, and Asn146. 2 disulfides stabilise this stretch: Cys120/Cys184 and Cys224/Cys279. The Ig-like domain occupies 205-292 (PEVWLSSSPN…HSSLRDQDII (88 aa)). The chain crosses the membrane as a helical span at residues 301-321 (VILITFAVIVPLVLLIILVLL). Residues 322–332 (CKKCCTYQGIP) are Cytoplasmic-facing.

As to quaternary structure, heterodimer with B2M (beta-2-microglobulin).

Its subcellular location is the cell membrane. It localises to the endosome membrane. In terms of biological role, antigen-presenting protein that binds self and non-self lipid and glycolipid antigens and presents them to T-cell receptors on natural killer T-cells. This is T-cell surface glycoprotein CD1c3 (CD1C3) from Cavia porcellus (Guinea pig).